Reading from the N-terminus, the 233-residue chain is UPF0758 protein RoseRS_0767 (233 aa).

In terms of domain architecture, MPN spans 107–229 (LIRSPTDAAQ…FVSMRERGLG (123 aa)). Residues histidine 178, histidine 180, and aspartate 191 each contribute to the Zn(2+) site. Residues 178–191 (HNHPSGDPTPSPED) carry the JAMM motif motif.

The protein belongs to the UPF0758 family.

This Roseiflexus sp. (strain RS-1) protein is UPF0758 protein RoseRS_0767.